A 1083-amino-acid polypeptide reads, in one-letter code: Solute carrier family 12 member 7 (1083 aa).

The tract at residues 1–55 (MPTNFTVVPVEARADGAGDEAAERTEEPESPESVDQTSPTPGDGNPRENSPFINN) is disordered. Topologically, residues 1 to 119 (MPTNFTVVPV…RREVKAPRMG (119 aa)) are cytoplasmic. The span at 12–27 (ARADGAGDEAAERTEE) shows a compositional bias: basic and acidic residues. Serine 30 and serine 33 each carry phosphoserine. Position 37 is a phosphothreonine (threonine 37). Phosphoserine occurs at positions 50 and 62. Residues 120–142 (TFIGVYLPCLQNILGVILFLRLT) traverse the membrane as a discontinuously helical segment. The K(+) site is built by asparagine 131 and isoleucine 132. Residue valine 135 participates in chloride binding. Residues 143-149 (WIVGAAG) lie on the Extracellular side of the membrane. A helical transmembrane segment spans residues 150-172 (VMESFLIVAMCCTCTMLTAISMS). Residues 173 to 196 (AIATNGVVPAGGSYYMISRSLGPE) lie on the Cytoplasmic side of the membrane. A helical membrane pass occupies residues 197–225 (FGGAVGLCFYLGTTFAGAMYILGTIEIFL). Residues 226-249 (TYISPSAAIFQAETADGEAAALLN) are Extracellular-facing. Transmembrane regions (helical) follow at residues 250 to 271 (NMRV…VGVK) and 272 to 300 (YVNK…KTAF). Over 301–419 (APPDIPVCLL…PYVLTDIMTY (119 aa)) the chain is Extracellular. An N-linked (GlcNAc...) (high mannose) asparagine glycan is attached at asparagine 312. N-linked (GlcNAc...) (complex) asparagine glycans are attached at residues asparagine 331 and asparagine 344. A glycan (N-linked (GlcNAc...) (high mannose) asparagine) is linked at asparagine 360. A helical transmembrane segment spans residues 420-440 (FTMLVGIYFPSVTGIMAGSNR). Residues proline 429 and threonine 432 each coordinate K(+). Residue proline 429 participates in chloride binding. 2 residues coordinate chloride: glycine 433 and isoleucine 434. Over 441–450 (SGDLKDAQKS) the chain is Cytoplasmic. The helical transmembrane segment at 451–473 (IPTGTILAIVTTSFIYLSCIVLF) threads the bilayer. The Extracellular segment spans residues 474–504 (GACIEGVVLRDKFGEALQGNLVIGMLAWPSP). Residues 505–531 (WVIVIGSFFSTCGAGLQSLTGAPRLLQ) traverse the membrane as a helical segment. Topologically, residues 532 to 554 (AIARDGIIPFLQVFGHGKANGEP) are cytoplasmic. The next 2 helical transmembrane spans lie at 555 to 573 (TWAL…LIAS) and 574 to 598 (LDSV…ACAV). Residue tyrosine 589 participates in chloride binding. The Cytoplasmic portion of the chain corresponds to 599–612 (QTLLRTPNWRPRFK). 2 helical membrane passes run 613–635 (FYHW…ICSW) and 636–651 (YYAL…IYKY). Residues 652–1083 (IEYRGAEKEW…GGREVITIYS (432 aa)) lie on the Cytoplasmic side of the membrane. The scissor helix stretch occupies residues 664–680 (GIRGLSLNAARYALLRV). 2 positions are modified to phosphothreonine: threonine 973 and threonine 980.

Belongs to the SLC12A transporter family. K/Cl co-transporter subfamily. Homodimer; adopts a domain-swap conformation at the scissor helices connecting the transmembrane domain and C-terminal domain. Heterodimer with K-Cl cotransporter SLC12A5. Glycosylation at Asn-331 and Asn-344 is required for proper trafficking to the cell surface, and augments protein stability. In terms of tissue distribution, detected in proximal tubules in the kidney, in particular in basolateral membranes of intercalated cells in the cortical collecting duct.

It is found in the cell membrane. The enzyme catalyses K(+)(in) + chloride(in) = K(+)(out) + chloride(out). Activated by N-ethylmaleimide (NEM). Inhibited by furosemide, DIDS and bumetanide. The inhibition is much stronger in the presence of 50 mM K(+) in the uptake medium. Inhibited by DIOA. Inhibited by WNK3. In terms of biological role, mediates electroneutral potassium-chloride cotransport when activated by cell swelling. May mediate K(+) uptake into Deiters' cells in the cochlea and contribute to K(+) recycling in the inner ear. Important for the survival of cochlear outer and inner hair cells and the maintenance of the organ of Corti. May be required for basolateral Cl(-) extrusion in the kidney and contribute to renal acidification. This Mus musculus (Mouse) protein is Solute carrier family 12 member 7 (Slc12a7).